A 504-amino-acid chain; its full sequence is Cytochrome P450 monooxygenase gsfF (504 aa).

An N-terminal signal peptide occupies residues 1–16 (MTVLFILSAGLVAVFG). Residues Asn-97 and Asn-150 are each glycosylated (N-linked (GlcNAc...) asparagine). Cys-450 lines the heme pocket.

The protein belongs to the cytochrome P450 family. Requires heme as cofactor.

The enzyme catalyses griseophenone B + reduced [NADPH--hemoprotein reductase] + O2 + H(+) = desmethyl-dehydrogriseofulvin + oxidized [NADPH--hemoprotein reductase] + 2 H2O. The protein operates within secondary metabolite biosynthesis; terpenoid biosynthesis. Its function is as follows. Cytochrome P450 monooxygenase; part of the gene cluster that mediates the biosynthesis of griseofulvin, an important antifungal drug that has been in use for a long time for treating dermatophyte infections. The first step of the pathway is the formation of the heptaketide backbone by gsfA which is initiated by priming with acetyl-CoA, followed by sequential condensations of 6 malonyl-CoA units. The resulting benzophenone can undergo a spontaneous dehydration to form norlichexanthone. However, the true precursor for the griseofulvin biosynthesis is not norlichexanthone, but the heptaketide benzophenone that is O-methylated at 3-OH by gsfB to produce griseophenone D which is further methylated at 9-OH by gsfC to yield griseophenone C. Griseophenone C is then substrate of halogenase gsfI which is responsible for the regio-specific chlorination at the C13 position to form griseophenone B. The cytochrome P450 gsfF catalyzes the coupling of orcinol and phloroglucinol rings in griseophenone B to form desmethyl-dehydrogriseofulvin A which is further methylated at 5-OH by gsfD to yield dehydrogriseofulvin. Finally, gsfE performs stereospecific reduction of enone 18 of dehydrogriseofulvin to afford the final product griseofulvin. This Penicillium aethiopicum protein is Cytochrome P450 monooxygenase gsfF.